The following is a 500-amino-acid chain: MPAFSLMIQGTTSDAGKSTLVTALCRLFYRRGISVAPFKPQNMALNSAVTKDGNEIGRAQAVQAYAAGLEPQVDMNPILLKPNTDTGAQVIIQGKAVGNMNAVGYHEYKSIAKVAALDSYQRLANQYQAVLIEGAGSPAEINLRARDIANMGFAESIDCPVIIIADIDKGGVFAHLVGTLDLLSPSEQDRVIGFVINRFRGDISLLQSGLDWLEERTGKPVLGVLPFLKGFHLESEDAVAKSPIKADSKAKLNIVIPIMPRTSNHTDWDALRLHPEVQVTLVGANETIPPADLVILPGSKSVQSDLAYLRQEGWEDYLNKHLRYGGKVIGICGGYQMLGEQLLDPLGLENQHANTRSTGFGFIPMETVLKEEKQLKQRQGQLAFAANAQVTGYEIHSGVSRFTDETQIAHFALLDDGKNKENSEKEGYISPDGQIIGTYLHGVFDHPDALQALLNWAGVDQAAAFDYDQFRDKEIDRLADSTEQNMNIDALIEQCQNFQQ.

Positions 251–449 constitute a GATase cobBQ-type domain; sequence KLNIVIPIMP…LHGVFDHPDA (199 aa). Cys332 acts as the Nucleophile in catalysis. Residue His441 is part of the active site.

Belongs to the CobB/CobQ family. CobQ subfamily.

Its pathway is cofactor biosynthesis; adenosylcobalamin biosynthesis. Its function is as follows. Catalyzes amidations at positions B, D, E, and G on adenosylcobyrinic A,C-diamide. NH(2) groups are provided by glutamine, and one molecule of ATP is hydrogenolyzed for each amidation. This Marinomonas sp. (strain MWYL1) protein is Cobyric acid synthase.